A 301-amino-acid chain; its full sequence is MKIAVLSRNPRLYSTRRLVEAGEQRGHEVVVIDTLRAYMNIASHKPQIHYRGKPLEGFDAVIPRIGASVTFYGCAVLRQFEMQGVFPLNESVAIARSRDKLRALQLLSRRGVGLPVTGFAHSPDDIPDLIRMVNGAPLVIKVLEGTQGIGVVLCETEKAAESVIEAFMGLKQDIMVQEYIKEAGGADIRCFVVGDKVIAAMKRQAKPGEFRSNLHRGGSASLIKITPEERMTAIRAAKVMGLNVAGVDILRSNHGPLVMEVNSSPGLAGIEETTGKDVAGLIIQYLEKNGGPHLTRTKGKG.

Residues 104–287 (LQLLSRRGVG…VAGLIIQYLE (184 aa)) form the ATP-grasp domain. ATP is bound by residues Lys-141, 178 to 179 (EY), Asp-187, and 211 to 213 (RSN). Asp-248, Glu-260, and Asn-262 together coordinate Mg(2+). Mn(2+) is bound by residues Asp-248, Glu-260, and Asn-262.

Belongs to the RimK family. It depends on Mg(2+) as a cofactor. The cofactor is Mn(2+).

In Stutzerimonas stutzeri (strain A1501) (Pseudomonas stutzeri), this protein is Probable alpha-L-glutamate ligase.